A 152-amino-acid polypeptide reads, in one-letter code: MSTFFLKQAQIEKQWIVVDATDAVVGRLAAFVSTILRGKTKPTYTPHMDCGDNVIVVNASKVKFSGSKMSDKVYYRHTGYPGGIKSTTPAKILRGKKPCEVVKLAVKRMLDDGPMARRRLKNLYVYAGPEHRHEAQKPSIVEFASLNRKNRR.

This sequence belongs to the universal ribosomal protein uL13 family. As to quaternary structure, part of the 50S ribosomal subunit.

Functionally, this protein is one of the early assembly proteins of the 50S ribosomal subunit, although it is not seen to bind rRNA by itself. It is important during the early stages of 50S assembly. This chain is Large ribosomal subunit protein uL13, found in Neorickettsia sennetsu (strain ATCC VR-367 / Miyayama) (Ehrlichia sennetsu).